The primary structure comprises 152 residues: MEAQKLSVEAIEKGTVIDHIPAGRGLTILRQFKLLHYGNAVTVGFNLPSKTQGSKDIIKIKGVCLDDKAADRLALFAPEAVVNTIDNFKVVQKRHLTLPDEIAEVFRCPNPNCAGHGEPVKSRFYVKKHNGQTRLKCHYCEKTYNRDSVAEA.

Residues Cys-108, Cys-113, Cys-137, and Cys-140 each contribute to the Zn(2+) site.

It belongs to the PyrI family. As to quaternary structure, contains catalytic and regulatory chains. Requires Zn(2+) as cofactor.

Involved in allosteric regulation of aspartate carbamoyltransferase. The polypeptide is Aspartate carbamoyltransferase regulatory chain (Neisseria gonorrhoeae (strain ATCC 700825 / FA 1090)).